The following is a 416-amino-acid chain: MAIHLKASHLGVAVLLLLFGGAIGAAGGGYLLSSGQNHSSPDSPVNTSPQSLTPAPVESNYRSALPLTLPRSAQDDQELNFIARAVQKIGPAVVRIDSERTAVSQGGPMGDQPFFRRFFGEEMPPNPDPREQGTGSGFILSSDGEVLTNAHVVEGASTVKVTLKDGSVLEGKVMGIDTMTDVAVVKVEAENLPVVEIGQSDRLQPGEWAIAIGNPLGLDNTVTVGIISALGRSSSEVGVPDKRVRFIQTDAAINPGNSGGPLLNAKGEVIGVNTAIRADAQGLGFAIPIQTAQNVAENLFTKGKMEHPYLGIHMVTLTPEMTKQLRTSGELPAGVTADTGVLIIQVSPGSPAAQAGLAPGDIILEVGGMGVKTATDVQERVEVSQIGEPLAIAVKRGQKPQMMAVRPGPFPEDLGQ.

The signal sequence occupies residues 1 to 25; it reads MAIHLKASHLGVAVLLLLFGGAIGA. Over residues 35-53 the composition is skewed to polar residues; sequence GQNHSSPDSPVNTSPQSLT. A disordered region spans residues 35 to 57; sequence GQNHSSPDSPVNTSPQSLTPAPV. The 79-residue stretch at 320–398 folds into the PDZ domain; it reads EMTKQLRTSG…PLAIAVKRGQ (79 aa).

It belongs to the peptidase S1C family.

Functionally, a putative protease, its function overlaps that of the related putative proteases HtrA and HhoA. In Synechocystis sp. (strain ATCC 27184 / PCC 6803 / Kazusa), this protein is Putative serine protease HhoB (hhoB).